The following is a 743-amino-acid chain: Keratin, type I cytoskeletal 9 (743 aa).

Residues 1–16 (MSCRQSSSSFWSSSSS) show a composition bias toward low complexity. Residues 1–46 (MSCRQSSSSFWSSSSSCGGGGGRGGSGGSMRSSFSRSSRAGGGGGG) are disordered. Residues 1 to 130 (MSCRQSSSSF…GGEGGILNTN (130 aa)) form a head region. 2 positions are modified to phosphoserine: Ser14 and Ser16. A compositionally biased stretch (gly residues) spans 17-28 (CGGGGGRGGSGG). Positions 29–39 (SMRSSFSRSSR) are enriched in low complexity. Residues Ser55 and Ser155 each carry the phosphoserine modification. The segment at 131 to 166 (EKIVMQNLNSRLASYMEKVLELEESNTAMEKQIQDW) is coil 1A. The IF rod domain maps to 131–443 (EKIVMQNLNS…ELLEGGQQDF (313 aa)). The linker 1 stretch occupies residues 167 to 185 (YSKRGPKVFQKDNTHYYDT). Residues 186–277 (IEDLKDRIVD…KNHKEEMSQL (92 aa)) are coil 1B. The segment at 278 to 300 (TGQNDGDVNVEINVAPSTDLTRV) is linker 12. The coil 2 stretch occupies residues 301–439 (LNDMREEYEQ…ETYRELLEGG (139 aa)). Disordered stretches follow at residues 440-468 (QQDFESSGAGQIGFGSGKGRQRGSGGSYG) and 501-743 (GGSG…KMRY). Positions 440-709 (QQDFESSGAG…GGGSGSGGGS (270 aa)) are tail. Gly residues-rich tracts occupy residues 449 to 468 (GQIGFGSGKGRQRGSGGSYG) and 501 to 717 (GGSG…GGGN).

Belongs to the intermediate filament family. As to quaternary structure, heterotetramer of two type I and two type II keratins. As to expression, expressed in footpad epidermis and testis (at protein level).

Functionally, may serve an important special function either in the mature palmar and plantar skin tissue or in the morphogenetic program of the formation of these tissues. Plays a role in keratin filament assembly. Plays an essential role in the correct development of sperm. This chain is Keratin, type I cytoskeletal 9, found in Mus musculus (Mouse).